The sequence spans 801 residues: Fibroblast growth factor receptor 3 (801 aa).

The signal sequence occupies residues 1–20; it reads MVVPACVLVFCVAVVAGATS. Residues 21–369 lie on the Extracellular side of the membrane; it reads EPPGPEQRVV…TDEAGSVYAG (349 aa). The Ig-like C2-type 1 domain maps to 22–124; that stretch reads PPGPEQRVVR…VLCHFSVRVT (103 aa). A disulfide bridge connects residues Cys-59 and Cys-107. Residue Asn-96 is glycosylated (N-linked (GlcNAc...) asparagine). The disordered stretch occupies residues 125-146; sequence DAPSSGDDEDGEDVAEDTGAPY. Residues 130–140 are compositionally biased toward acidic residues; it reads GDDEDGEDVAE. Ig-like C2-type domains follow at residues 145 to 238 and 247 to 349; these read PYWT…YTLD and PILQ…AWLV. A disulfide bridge connects residues Cys-170 and Cys-222. Asn-219, Asn-256, Asn-288, Asn-309, and Asn-322 each carry an N-linked (GlcNAc...) asparagine glycan. Cys-269 and Cys-333 are joined by a disulfide. The helical transmembrane segment at 370 to 390 threads the bilayer; that stretch reads VLSYGVVFFLFILVVAAVILC. At 391–801 the chain is on the cytoplasmic side; it reads RLRSPPKKGL…GPPSNGGPRT (411 aa). 2 positions are modified to phosphoserine: Ser-438 and Ser-439. In terms of domain architecture, Protein kinase spans 466–756; sequence LTLGKPLGEG…LTVTSTDEYL (291 aa). ATP contacts are provided by residues 472 to 480 and Lys-502; that span reads LGEGCFGQV. The active-site Proton acceptor is the Asp-611. Phosphotyrosine; by autocatalysis is present on residues Tyr-641, Tyr-642, Tyr-719, and Tyr-755. The disordered stretch occupies residues 762-801; it reads FEQYSPGGQDTPSSSSSGDDSVFTHDLLPPGPPSNGGPRT. Over residues 766–782 the composition is skewed to low complexity; it reads SPGGQDTPSSSSSGDDS. Positions 790-801 are enriched in pro residues; the sequence is PPGPPSNGGPRT.

This sequence belongs to the protein kinase superfamily. Tyr protein kinase family. Fibroblast growth factor receptor subfamily. As to quaternary structure, monomer. Homodimer after ligand binding. Interacts with FGF1, FGF2, FGF4, FGF6; FGF8, FGF9, FGF10, FGF17, FGF18, FGF19, FGF20 and FGF23 (in vitro). Interacts with KLB. Affinity for fibroblast growth factors (FGFs) is increased by heparan sulfate glycosaminoglycans that function as coreceptors. Likewise, KLB increases the affinity for FGF19 and FGF21. Interacts with PIK3R1, PLCG1, SOCS1 and SOCS3. In terms of processing, autophosphorylated. Binding of FGF family members together with heparan sulfate proteoglycan or heparin promotes receptor dimerization and autophosphorylation on tyrosine residues. Autophosphorylation occurs in trans between the two FGFR molecules present in the dimer. Phosphorylation at Tyr-719 is essential for stimulation of cell proliferation and activation of PIK3R1, STAT1 and MAP kinase signaling. Phosphorylation at Tyr-755 is required for interaction with PIK3R1 and PLCG1. Post-translationally, ubiquitinated. Is rapidly ubiquitinated after ligand binding and autophosphorylation, leading to receptor internalization and degradation. Subject to both proteasomal and lysosomal degradation. N-glycosylated in the endoplasmic reticulum. The N-glycan chains undergo further maturation to an Endo H-resistant form in the Golgi apparatus. In terms of tissue distribution, in embryo, expressed in heart, lung, kidney, skin, head and liver but not in muscle. In adult, highest levels in brain. Also expressed in liver, lung, kidney, testis, ovary and uterus. Very low levels in heart, thymus, spleen and muscle.

The protein resides in the cell membrane. It localises to the cytoplasmic vesicle. The protein localises to the endoplasmic reticulum. It catalyses the reaction L-tyrosyl-[protein] + ATP = O-phospho-L-tyrosyl-[protein] + ADP + H(+). With respect to regulation, present in an inactive conformation in the absence of bound ligand. Ligand binding leads to dimerization and activation by autophosphorylation on tyrosine residues. Functionally, tyrosine-protein kinase that acts as a cell-surface receptor for fibroblast growth factors and plays an essential role in the regulation of cell proliferation, differentiation and apoptosis. Plays an essential role in the regulation of chondrocyte differentiation, proliferation and apoptosis, and is required for normal skeleton development. Regulates both osteogenesis and postnatal bone mineralization by osteoblasts. Promotes apoptosis in chondrocytes, but can also promote cancer cell proliferation. Required for normal development of the inner ear. Phosphorylates PLCG1, CBL and FRS2. Ligand binding leads to the activation of several signaling cascades. Activation of PLCG1 leads to the production of the cellular signaling molecules diacylglycerol and inositol 1,4,5-trisphosphate. Phosphorylation of FRS2 triggers recruitment of GRB2, GAB1, PIK3R1 and SOS1, and mediates activation of RAS, MAPK1/ERK2, MAPK3/ERK1 and the MAP kinase signaling pathway, as well as of the AKT1 signaling pathway. Plays a role in the regulation of vitamin D metabolism. Mutations that lead to constitutive kinase activation or impair normal FGFR3 maturation, internalization and degradation lead to aberrant signaling. Over-expressed or constitutively activated FGFR3 promotes activation of STAT1, STAT5A and STAT5B. Plays a role in postnatal lung development. The polypeptide is Fibroblast growth factor receptor 3 (Fgfr3) (Mus musculus (Mouse)).